The primary structure comprises 339 residues: Ketol-acid reductoisomerase (NADP(+)) (339 aa).

A KARI N-terminal Rossmann domain is found at 1-182 (MRVYYDRDAD…GGGRAGIIET (182 aa)). Residues 24 to 27 (YGSQ), Arg48, Ser51, Ser53, and 83 to 86 (DELQ) each bind NADP(+). Residue His108 is part of the active site. Gly134 contacts NADP(+). Positions 183–328 (TFREECETDL…AKLRDMMPWI (146 aa)) constitute a KARI C-terminal knotted domain. Residues Asp191, Glu195, Glu227, and Glu231 each coordinate Mg(2+). Ser252 provides a ligand contact to substrate.

Belongs to the ketol-acid reductoisomerase family. Requires Mg(2+) as cofactor.

It carries out the reaction (2R)-2,3-dihydroxy-3-methylbutanoate + NADP(+) = (2S)-2-acetolactate + NADPH + H(+). The catalysed reaction is (2R,3R)-2,3-dihydroxy-3-methylpentanoate + NADP(+) = (S)-2-ethyl-2-hydroxy-3-oxobutanoate + NADPH + H(+). The protein operates within amino-acid biosynthesis; L-isoleucine biosynthesis; L-isoleucine from 2-oxobutanoate: step 2/4. It functions in the pathway amino-acid biosynthesis; L-valine biosynthesis; L-valine from pyruvate: step 2/4. In terms of biological role, involved in the biosynthesis of branched-chain amino acids (BCAA). Catalyzes an alkyl-migration followed by a ketol-acid reduction of (S)-2-acetolactate (S2AL) to yield (R)-2,3-dihydroxy-isovalerate. In the isomerase reaction, S2AL is rearranged via a Mg-dependent methyl migration to produce 3-hydroxy-3-methyl-2-ketobutyrate (HMKB). In the reductase reaction, this 2-ketoacid undergoes a metal-dependent reduction by NADPH to yield (R)-2,3-dihydroxy-isovalerate. The polypeptide is Ketol-acid reductoisomerase (NADP(+)) (Rhodopseudomonas palustris (strain ATCC BAA-98 / CGA009)).